The sequence spans 365 residues: Chloroplast protein FOR GROWTH AND FERTILITY 1 (365 aa).

Disordered regions lie at residues 1-30 (MERL…LPRL) and 62-90 (YTPI…PGFL). A chloroplast-targeting transit peptide spans 1–79 (MERLLQPSSS…TNNSFNGSPK (79 aa)). Low complexity-rich tracts occupy residues 7–24 (PSSS…SRTS) and 62–77 (YTPI…FNGS). Helical transmembrane passes span 109–129 (VILI…PPAF), 139–159 (GWLT…LSGP), 182–202 (ALWG…FLLL), 218–238 (IVGL…SEIP), 274–294 (GVVH…LALP), 301–321 (AFLI…TAFI), and 345–365 (LVAI…FSLY).

As to expression, mostly expressed in leaves and flowers, to a lower extent, in stems, roots, floral bud, inflorescence and siliques, and, barely, in seedlings.

Its subcellular location is the plastid. The protein localises to the chloroplast membrane. It localises to the plastid membrane. In terms of biological role, together with CGF2, essential protein which supports female gametogenesis and embryogenesis, probably by securing local energy supply. The sequence is that of Chloroplast protein FOR GROWTH AND FERTILITY 1 from Arabidopsis thaliana (Mouse-ear cress).